A 248-amino-acid chain; its full sequence is Glucosamine-6-phosphate isomerase (248 aa).

Catalysis depends on Asp68, which acts as the Proton acceptor; for enolization step. Glu137 functions as the For ring-opening step in the catalytic mechanism. The active-site Proton acceptor; for ring-opening step is the His139. The active-site For ring-opening step is the Glu144.

The protein belongs to the glucosamine/galactosamine-6-phosphate isomerase family. Monomer.

The enzyme catalyses alpha-D-glucosamine 6-phosphate + H2O = beta-D-fructose 6-phosphate + NH4(+). The protein is Glucosamine-6-phosphate isomerase (NAG1) of Candida albicans (strain SC5314 / ATCC MYA-2876) (Yeast).